Consider the following 199-residue polypeptide: Imidazoleglycerol-phosphate dehydratase (199 aa).

The protein belongs to the imidazoleglycerol-phosphate dehydratase family.

It localises to the cytoplasm. It catalyses the reaction D-erythro-1-(imidazol-4-yl)glycerol 3-phosphate = 3-(imidazol-4-yl)-2-oxopropyl phosphate + H2O. Its pathway is amino-acid biosynthesis; L-histidine biosynthesis; L-histidine from 5-phospho-alpha-D-ribose 1-diphosphate: step 6/9. The polypeptide is Imidazoleglycerol-phosphate dehydratase (Methylibium petroleiphilum (strain ATCC BAA-1232 / LMG 22953 / PM1)).